A 303-amino-acid chain; its full sequence is Recombination-associated protein RdgC (303 aa).

It belongs to the RdgC family.

It is found in the cytoplasm. The protein localises to the nucleoid. Its function is as follows. May be involved in recombination. The protein is Recombination-associated protein RdgC of Yersinia enterocolitica serotype O:8 / biotype 1B (strain NCTC 13174 / 8081).